A 690-amino-acid chain; its full sequence is DNA ligase (690 aa).

Residues 36–40 (DAVYD), 85–86 (SL), and glutamate 124 contribute to the NAD(+) site. Catalysis depends on lysine 126, which acts as the N6-AMP-lysine intermediate. NAD(+) is bound by residues arginine 147, glutamate 184, lysine 308, and lysine 332. Zn(2+) is bound by residues cysteine 426, cysteine 429, cysteine 444, and cysteine 449. The BRCT domain occupies 614–690 (NQSNVFDGKS…INENELKLLL (77 aa)).

It belongs to the NAD-dependent DNA ligase family. LigA subfamily. It depends on Mg(2+) as a cofactor. The cofactor is Mn(2+).

The enzyme catalyses NAD(+) + (deoxyribonucleotide)n-3'-hydroxyl + 5'-phospho-(deoxyribonucleotide)m = (deoxyribonucleotide)n+m + AMP + beta-nicotinamide D-nucleotide.. Functionally, DNA ligase that catalyzes the formation of phosphodiester linkages between 5'-phosphoryl and 3'-hydroxyl groups in double-stranded DNA using NAD as a coenzyme and as the energy source for the reaction. It is essential for DNA replication and repair of damaged DNA. The protein is DNA ligase of Prochlorococcus marinus (strain NATL1A).